The primary structure comprises 221 residues: Glutathione S-transferase alpha-5 (221 aa).

Residues 3-83 enclose the GST N-terminal domain; the sequence is GKPVLHYFDG…YIATKYNLYG (81 aa). Lys-4 carries the post-translational modification N6-succinyllysine. Glutathione is bound by residues Tyr-9, Arg-45, 54-55, and 67-68; these read QV and QT. The GST C-terminal domain occupies 85 to 207; sequence DMKERALIDM…LQPGSQRKPF (123 aa).

The protein belongs to the GST superfamily. Alpha family. In terms of assembly, heterodimer of YC1 and YC2. In terms of tissue distribution, liver, nasal mucosa and epididymis.

The protein localises to the cytoplasm. It catalyses the reaction RX + glutathione = an S-substituted glutathione + a halide anion + H(+). Functionally, conjugation of reduced glutathione to a wide number of exogenous and endogenous hydrophobic electrophiles. Has substantial activity toward aflatoxin B1-8,9-epoxide. This is Glutathione S-transferase alpha-5 (Gsta5) from Rattus norvegicus (Rat).